The primary structure comprises 157 residues: Acetyltransferase PseH (157 aa).

In terms of domain architecture, N-acetyltransferase spans 5–152 (KNFAELNSQE…YYVCLKQSHC (148 aa)).

Catalyzes the third step in the biosynthesis of pseudaminic acid, a sialic-acid-like sugar that is used to modify flagellin. Mediates N-4 acetylation of UDP-4-amino-4,6-dideoxy-beta-L-AltNAc to form UDP-2,4-diacetamido-2,4,6-trideoxy-beta-L-altropyranose. In Campylobacter jejuni subsp. jejuni serotype O:2 (strain ATCC 700819 / NCTC 11168), this protein is Acetyltransferase PseH (pseH).